Here is a 529-residue protein sequence, read N- to C-terminus: Peptide chain release factor 3 (529 aa).

Positions Ser11–Met280 constitute a tr-type G domain. Residues Ser20 to Thr27, Asp88 to His92, and Asn142 to Asp145 each bind GTP.

The protein belongs to the TRAFAC class translation factor GTPase superfamily. Classic translation factor GTPase family. PrfC subfamily.

The protein resides in the cytoplasm. Increases the formation of ribosomal termination complexes and stimulates activities of RF-1 and RF-2. It binds guanine nucleotides and has strong preference for UGA stop codons. It may interact directly with the ribosome. The stimulation of RF-1 and RF-2 is significantly reduced by GTP and GDP, but not by GMP. This chain is Peptide chain release factor 3, found in Pectobacterium carotovorum subsp. carotovorum (strain PC1).